A 375-amino-acid polypeptide reads, in one-letter code: Peptidyl-prolyl cis-trans isomerase D (375 aa).

The PPIase cyclophilin-type domain occupies 7–169; the sequence is YFDITIANEP…QAVTISSAGV (163 aa). TPR repeat units lie at residues 217-250, 270-307, and 312-345; these read AGKL…LDVH, LPLL…PNLS, and GKAL…VPGD.

This sequence belongs to the cyclophilin-type PPIase family. PPIase D subfamily.

The protein localises to the cytoplasm. The enzyme catalyses [protein]-peptidylproline (omega=180) = [protein]-peptidylproline (omega=0). Its function is as follows. PPIases accelerate the folding of proteins. It catalyzes the cis-trans isomerization of proline imidic peptide bonds in oligopeptides. The sequence is that of Peptidyl-prolyl cis-trans isomerase D (CPR6) from Cryptococcus neoformans var. neoformans serotype D (strain JEC21 / ATCC MYA-565) (Filobasidiella neoformans).